Here is a 472-residue protein sequence, read N- to C-terminus: Pyridine nucleotide-disulfide oxidoreductase domain-containing protein 1 (472 aa).

This sequence belongs to the class-I pyridine nucleotide-disulfide oxidoreductase family. PYROXD1 subfamily. It depends on FAD as a cofactor.

In terms of biological role, probable oxidoreductase. The protein is Pyridine nucleotide-disulfide oxidoreductase domain-containing protein 1 of Drosophila melanogaster (Fruit fly).